Consider the following 585-residue polypeptide: Epithelial sodium channel subunit gamma (585 aa).

Over 1–55 the chain is Cytoplasmic; it reads MAPGEKIKAKIKKNLPVTGPQAPTIKELMRWYCLNTNTHGCRRIVVSRGRLRRLL. A helical membrane pass occupies residues 56-76; it reads WIGFTLTAVALILWQCALLVF. The Extracellular portion of the chain corresponds to 77 to 477; sequence SFYTVSVSIK…GGQLGLWMSC (401 aa). Intrachain disulfides connect cysteine 100–cysteine 219, cysteine 308–cysteine 393, cysteine 330–cysteine 389, cysteine 334–cysteine 385, cysteine 343–cysteine 370, and cysteine 345–cysteine 359. N-linked (GlcNAc...) asparagine glycosylation is present at asparagine 207. An N-linked (GlcNAc...) asparagine glycan is attached at asparagine 433. A helical transmembrane segment spans residues 478 to 498; the sequence is SVVCVIEIIEVFFIDFFSIIA. The Cytoplasmic segment spans residues 499-585; that stretch reads RRQWQKAKEW…LTDTQMLDEL (87 aa). Residues 513–534 are disordered; that stretch reads QAPPCPEAPRSPQGQDNPALDI. The PY motif; recruits WW domain-containing proteins and is thereby required for ubiquitination and inhibition of the channel by NEDD4 and NEDD4L motif lies at 559 to 563; the sequence is PPPKY.

Belongs to the amiloride-sensitive sodium channel (TC 1.A.6) family. SCNN1G subfamily. As to quaternary structure, component of the heterotrimeric epithelial sodium channel (ENaC) composed of an alpha/SCNN1A, a beta/SCNN1B and a gamma/SCNN1G subunit. An additional delta/SCNN1D subunit can replace the alpha/SCNN1A subunit to form an alternative channel with specific properties. Interacts with WWP1 (via WW domains). Interacts with WWP2 (via WW domains); inhibits the channel. Interacts with the full-length immature form of PCSK9 (pro-PCSK9); inhibits ENaC by promoting its proteasomal degradation. Interacts with BPIFA1; the interaction is indirect via SCNN1B and inhibits the proteolytic maturation of SCNN1A and SCNN1G and the activation of ENaC. Phosphorylated on serine and threonine residues. Aldosterone and insulin increase the basal level of phosphorylation. In terms of processing, ubiquitinated. Can be ubiquitinated at multiple sites and undergo monoubiquitination and polyubiquitination. Ubiquitination by NEDD4 or NEDD4L inhibits the ENaC channel through endocytosis, intracellular retention and degradation of its individual subunits. Post-translationally, ENaC is activated through the proteolytic maturation of its subunits. Furin cleaves the SCNN1G subunit first, followed by cleavage by prostasin (PRSS8), which results in a stepwise increase in the open probability of the channel due to the release of an inhibitory tract. BPIFA1, which is recruited by the SCNN1B subunit, prevents the proteolytic activation of ENaC. N-glycosylated. N-linked glycans are processed to complex type during ENaC complex assembly and transport to the plasma membrane.

It localises to the apical cell membrane. The enzyme catalyses Na(+)(in) = Na(+)(out). Originally identified and characterized by its inhibition by the diuretic drug amiloride. Its function is as follows. This is one of the three pore-forming subunits of the heterotrimeric epithelial sodium channel (ENaC), a critical regulator of sodium balance and fluid homeostasis. ENaC operates in epithelial tissues, where it mediates the electrodiffusion of sodium ions from extracellular fluid through the apical membrane of cells, with water following osmotically. It plays a key role in maintaining sodium homeostasis through electrogenic sodium reabsorption in the kidneys. Additionally, ENaC is essential for airway surface liquid homeostasis, which is crucial for proper mucus clearance. The sequence is that of Epithelial sodium channel subunit gamma from Pan troglodytes (Chimpanzee).